The chain runs to 456 residues: D-glycerate 3-kinase, chloroplastic (456 aa).

The N-terminal 63 residues, 1–63 (MAVAISGSSL…KFNDHVVNPS (63 aa)), are a transit peptide targeting the chloroplast. 215–222 (APQGCGKT) contributes to the ATP binding site.

The protein belongs to the GLYK kinase family.

It is found in the plastid. It localises to the chloroplast. Its subcellular location is the cytoplasm. It catalyses the reaction (R)-glycerate + ATP = (2R)-3-phosphoglycerate + ADP + H(+). Its pathway is photosynthesis; photorespiration; 3-phospho-D-glycerate from glycine: step 4/4. Catalyzes the concluding reaction of the photorespiratory C2 cycle, an indispensable ancillary metabolic pathway to the photosynthetic C3 cycle that enables land plants to grow in an oxygen-containing atmosphere. In terms of biological role, cytoplasmic D-glycerate 3-kinase that constitutes a photorespiratory bypass that alleviates fluctuating light-induced photoinhibition. The polypeptide is D-glycerate 3-kinase, chloroplastic (Arabidopsis thaliana (Mouse-ear cress)).